The primary structure comprises 149 residues: uncharacterized protein (149 aa).

Residues 130 to 144 (ESNVTKENIEIKEEK) are compositionally biased toward basic and acidic residues. The disordered stretch occupies residues 130–149 (ESNVTKENIEIKEEKEENSE).

This is an uncharacterized protein from Methanocaldococcus jannaschii (strain ATCC 43067 / DSM 2661 / JAL-1 / JCM 10045 / NBRC 100440) (Methanococcus jannaschii).